The chain runs to 287 residues: Energy-coupling factor transporter ATP-binding protein EcfA1 (287 aa).

The ABC transporter domain occupies 6-248; the sequence is IVAEGVSYAY…ADRIRALRLD (243 aa). 47–54 is a binding site for ATP; sequence GMNGSGKS.

The protein belongs to the ABC transporter superfamily. Energy-coupling factor EcfA family. As to quaternary structure, forms a stable energy-coupling factor (ECF) transporter complex composed of 2 membrane-embedded substrate-binding proteins (S component), 2 ATP-binding proteins (A component) and 2 transmembrane proteins (T component).

The protein resides in the cell membrane. Functionally, ATP-binding (A) component of a common energy-coupling factor (ECF) ABC-transporter complex. Unlike classic ABC transporters this ECF transporter provides the energy necessary to transport a number of different substrates. This chain is Energy-coupling factor transporter ATP-binding protein EcfA1, found in Symbiobacterium thermophilum (strain DSM 24528 / JCM 14929 / IAM 14863 / T).